Consider the following 530-residue polypeptide: Transcription factor SPT20 homolog (530 aa).

Residue S296 is modified to Phosphoserine. Residues 419–530 (CPVKMSHSSS…PASSSQRHES (112 aa)) form a disordered region. Composition is skewed to low complexity over residues 424–436 (SHSSSGSASLNSG) and 466–475 (SSSGNSSSGN). Residue T490 is modified to Phosphothreonine. Over residues 514 to 530 (LSPAALSPASSSQRHES) the composition is skewed to low complexity. Phosphoserine is present on residues S515 and S520.

The protein belongs to the SPT20 family. In terms of assembly, interacts with ATG9A. Interacts with MAPK14.

Functionally, required for MAP kinase p38 (MAPK11, MAPK12, MAPK13 and/or MAPK14) activation during gastrulation. Required for down-regulation of E-cadherin during gastrulation by regulating E-cadherin protein level downstream from NCK-interacting kinase (NIK) and independently of the regulation of transcription by FGF signaling and Snail. Required for starvation-induced ATG9A trafficking during autophagy. This Rattus norvegicus (Rat) protein is Transcription factor SPT20 homolog (Supt20h).